We begin with the raw amino-acid sequence, 122 residues long: MKKYNKSIGFYGEDLSAKFLKKEGYSILEKNFNCSSGEIDIIAIKDEIISFIEVKSRFSNSFGNPKESVTCSKQGRIINAAKYYLHVKKLYNYYIRFDVIEVNFHIDSSKYELNFLKDAFRV.

It belongs to the UPF0102 family.

This is UPF0102 protein CPF_1959 from Clostridium perfringens (strain ATCC 13124 / DSM 756 / JCM 1290 / NCIMB 6125 / NCTC 8237 / Type A).